The chain runs to 157 residues: Putative pre-16S rRNA nuclease (157 aa).

It belongs to the YqgF nuclease family.

The protein resides in the cytoplasm. Its function is as follows. Could be a nuclease involved in processing of the 5'-end of pre-16S rRNA. The polypeptide is Putative pre-16S rRNA nuclease (Anaplasma marginale (strain St. Maries)).